We begin with the raw amino-acid sequence, 280 residues long: tRNA dimethylallyltransferase (280 aa).

Residue 9–16 (GPTGSGKT) participates in ATP binding. Position 11-16 (11-16 (TGSGKT)) interacts with substrate. An interaction with substrate tRNA region spans residues 34-37 (DSVS).

Belongs to the IPP transferase family. Monomer. Requires Mg(2+) as cofactor.

The catalysed reaction is adenosine(37) in tRNA + dimethylallyl diphosphate = N(6)-dimethylallyladenosine(37) in tRNA + diphosphate. Its function is as follows. Catalyzes the transfer of a dimethylallyl group onto the adenine at position 37 in tRNAs that read codons beginning with uridine, leading to the formation of N6-(dimethylallyl)adenosine (i(6)A). This is tRNA dimethylallyltransferase from Acholeplasma laidlawii (strain PG-8A).